Here is a 125-residue protein sequence, read N- to C-terminus: RutC family protein STK_08110 (125 aa).

The protein belongs to the RutC family.

This chain is RutC family protein STK_08110, found in Sulfurisphaera tokodaii (strain DSM 16993 / JCM 10545 / NBRC 100140 / 7) (Sulfolobus tokodaii).